Here is a 159-residue protein sequence, read N- to C-terminus: Protein SPA, chloroplastic (159 aa).

The N-terminal 47 residues, 1–47 (MLTAPSLSRFKSPFISSPLKLPTLSSSFFTQKFHQTCRRRNSYPCIK), are a transit peptide targeting the chloroplast. The helical transmembrane segment at 56-76 (VIAITVGVLSVAIGVGIPVFY) threads the bilayer. Residues 85 to 145 (KRENTQPCFP…TCTTCQGSGI (61 aa)) form a CR-type-like region. CXXCXGXG motif repeat units lie at residues 92-99 (CFPCTGTG), 103-110 (CRFCMGTG), 126-133 (CINCDGAG), and 137-144 (CTTCQGSG).

In terms of tissue distribution, expressed in source leaves. Lower levels of expression in fruits and stems.

The protein resides in the plastid. Its subcellular location is the chloroplast thylakoid membrane. In terms of biological role, participates in determining harvest index (HI) by affecting source-sink carbon distribution. Up-regulates the conversion of fixed carbon to exportable sugars. This chain is Protein SPA, chloroplastic, found in Solanum lycopersicum (Tomato).